A 663-amino-acid chain; its full sequence is MDIEKRILELREILNYHSHKYYVEDAPEISDFEYDELYRELEKLEQERPDLITPDSPTQRIGGKPLEGFKKVVHAVQMQSLSDVFSREELLAFDRRVREAVGDDVEYVVEKKIDGLSVSLVYENGVFTRGATRGDGLVGEDVTQNLKTIRTIPLRLKRDLPLLEVRGEVFISKKDFIKINEEQEAAGQQLFANPRNAAAGSLRQLDPKVTSQRKLDIFVFNIQRIEGQSFKTHSETLEFLKELGFKTSPGYKVCKDINAVWEEINRIGEERGEIDFEIDGAVVKVNSLEQREILGSTIKAPRWAVAYKYPAEVKETVVKKITVNVGRTGVLTPIAIFDPVRLAGSTVSRATLHNMDYIKEKDIRIGDTVRIRKAGDIIPEVVDVVFEKRSGNEAEFNMPEQCPVCGADVVREEGEAAYRCTGIECSAQLYRKIVHFASRDAMNIEGLGPAIIEVLLEKGLIKEIADLYYLHKEKETLVNIERMGKKSVENLLASIEKSKQNNIDRLIFGFGIRHIGLRAAQLLSENFESLDALMNASAEDIMAIPEFGEKMAKSVEQFFRQKQNRDTVEKLKAAGVNTVSFGKKKIKDNRFEGKTFVLTGTLPSFTRKEAEEIIKSFGGKTSGSVSKKTDYVLAGEDAGSKLQKAKELGIEIIDEDKFRKMIE.

NAD(+) contacts are provided by residues 31–35, 80–81, and glutamate 110; these read DFEYD and SL. Lysine 112 (N6-AMP-lysine intermediate) is an active-site residue. Arginine 133, glutamate 168, lysine 284, and lysine 308 together coordinate NAD(+). 4 residues coordinate Zn(2+): cysteine 402, cysteine 405, cysteine 420, and cysteine 425. The BRCT domain occupies 586–663; the sequence is IKDNRFEGKT…DEDKFRKMIE (78 aa).

Belongs to the NAD-dependent DNA ligase family. LigA subfamily. It depends on Mg(2+) as a cofactor. The cofactor is Mn(2+).

It carries out the reaction NAD(+) + (deoxyribonucleotide)n-3'-hydroxyl + 5'-phospho-(deoxyribonucleotide)m = (deoxyribonucleotide)n+m + AMP + beta-nicotinamide D-nucleotide.. Its function is as follows. DNA ligase that catalyzes the formation of phosphodiester linkages between 5'-phosphoryl and 3'-hydroxyl groups in double-stranded DNA using NAD as a coenzyme and as the energy source for the reaction. It is essential for DNA replication and repair of damaged DNA. This is DNA ligase from Acetivibrio thermocellus (strain ATCC 27405 / DSM 1237 / JCM 9322 / NBRC 103400 / NCIMB 10682 / NRRL B-4536 / VPI 7372) (Clostridium thermocellum).